The chain runs to 215 residues: 3-dehydroquinate dehydratase (215 aa).

3-dehydroquinate-binding positions include 27 to 29 and Arg-54; that span reads EVR. His-112 serves as the catalytic Proton donor/acceptor. Lys-139 (schiff-base intermediate with substrate) is an active-site residue. 3-dehydroquinate contacts are provided by Arg-176 and Gln-198.

It belongs to the type-I 3-dehydroquinase family. In terms of assembly, homodimer.

It carries out the reaction 3-dehydroquinate = 3-dehydroshikimate + H2O. It functions in the pathway metabolic intermediate biosynthesis; chorismate biosynthesis; chorismate from D-erythrose 4-phosphate and phosphoenolpyruvate: step 3/7. Functionally, involved in the third step of the chorismate pathway, which leads to the biosynthesis of aromatic amino acids. Catalyzes the cis-dehydration of 3-dehydroquinate (DHQ) and introduces the first double bond of the aromatic ring to yield 3-dehydroshikimate. The polypeptide is 3-dehydroquinate dehydratase (Thermococcus onnurineus (strain NA1)).